The primary structure comprises 205 residues: Cytochrome c biogenesis ATP-binding export protein CcmA (205 aa).

The 203-residue stretch at 2-204 folds into the ABC transporter domain; the sequence is LEVSNLTAIR…SPKLRKIKLG (203 aa). 34 to 41 is a binding site for ATP; the sequence is GRNGTGKT.

It belongs to the ABC transporter superfamily. CcmA exporter (TC 3.A.1.107) family. As to quaternary structure, the complex is composed of two ATP-binding proteins (CcmA) and two transmembrane proteins (CcmB).

The protein resides in the cell inner membrane. The catalysed reaction is heme b(in) + ATP + H2O = heme b(out) + ADP + phosphate + H(+). Its function is as follows. Part of the ABC transporter complex CcmAB involved in the biogenesis of c-type cytochromes; once thought to export heme, this seems not to be the case, but its exact role is uncertain. Responsible for energy coupling to the transport system. This chain is Cytochrome c biogenesis ATP-binding export protein CcmA, found in Vibrio parahaemolyticus serotype O3:K6 (strain RIMD 2210633).